Here is a 115-residue protein sequence, read N- to C-terminus: NADH-ubiquinone oxidoreductase chain 3 (115 aa).

3 helical membrane passes run 4-24, 55-75, and 84-104; these read LLVIAVNTILSLILITVAFWL, FFLVAITFLLFDLEIALLLPI, and INMVLPTALILLTILALGLAY.

It belongs to the complex I subunit 3 family. Core subunit of respiratory chain NADH dehydrogenase (Complex I) which is composed of 45 different subunits. Interacts with TMEM186. Interacts with TMEM242.

The protein localises to the mitochondrion inner membrane. It catalyses the reaction a ubiquinone + NADH + 5 H(+)(in) = a ubiquinol + NAD(+) + 4 H(+)(out). In terms of biological role, core subunit of the mitochondrial membrane respiratory chain NADH dehydrogenase (Complex I) which catalyzes electron transfer from NADH through the respiratory chain, using ubiquinone as an electron acceptor. Essential for the catalytic activity of complex I. This Ochrotomys nuttalli (Golden mouse) protein is NADH-ubiquinone oxidoreductase chain 3.